Consider the following 173-residue polypeptide: Co-chaperone protein HscB homolog (173 aa).

A J domain is found at 5 to 77; it reads CHFAQFDLQP…PRRALYLLTL (73 aa).

It belongs to the HscB family. As to quaternary structure, interacts with HscA and stimulates its ATPase activity.

Its function is as follows. Co-chaperone involved in the maturation of iron-sulfur cluster-containing proteins. Seems to help targeting proteins to be folded toward HscA. This Pseudomonas paraeruginosa (strain DSM 24068 / PA7) (Pseudomonas aeruginosa (strain PA7)) protein is Co-chaperone protein HscB homolog.